Here is a 345-residue protein sequence, read N- to C-terminus: Dihydroorotase (345 aa).

The Zn(2+) site is built by H14 and H16. Substrate contacts are provided by residues 16–18 (HLR) and N42. The Zn(2+) site is built by K100, H137, and H175. K100 is modified (N6-carboxylysine). A substrate-binding site is contributed by H137. L220 serves as a coordination point for substrate. D248 contacts Zn(2+). D248 is a catalytic residue. Residues H252 and A264 each coordinate substrate.

This sequence belongs to the metallo-dependent hydrolases superfamily. DHOase family. Class II DHOase subfamily. Homodimer. Requires Zn(2+) as cofactor.

The enzyme catalyses (S)-dihydroorotate + H2O = N-carbamoyl-L-aspartate + H(+). It participates in pyrimidine metabolism; UMP biosynthesis via de novo pathway; (S)-dihydroorotate from bicarbonate: step 3/3. Its function is as follows. Catalyzes the reversible cyclization of carbamoyl aspartate to dihydroorotate. The sequence is that of Dihydroorotase from Nitrosococcus oceani (strain ATCC 19707 / BCRC 17464 / JCM 30415 / NCIMB 11848 / C-107).